Consider the following 756-residue polypeptide: Probable chemoreceptor y4sI (756 aa).

2 helical membrane-spanning segments follow: residues 26–46 (VCVA…TSVA) and 330–350 (LIKI…MAIL). HAMP domains are found at residues 353-406 (RSIS…ARVA) and 434-486 (DEQA…ETIR). The Methyl-accepting transducer domain maps to 491–720 (QAASMSSIVS…ESDAACRSLN (230 aa)). The tract at residues 736-756 (GGGSSTRQPQSPPTQRYFMSR) is disordered.

The protein belongs to the methyl-accepting chemotaxis (MCP) protein family.

It is found in the cell membrane. Its function is as follows. Chemotactic-signal transducers respond to changes in the concentration of attractants and repellents in the environment, transduce a signal from the outside to the inside of the cell, and facilitate sensory adaptation through the variation of the level of methylation. Attractants increase the level of methylation while repellents decrease the level of methylation. In Sinorhizobium fredii (strain NBRC 101917 / NGR234), this protein is Probable chemoreceptor y4sI.